Consider the following 298-residue polypeptide: MNLNKAQAQNIASVLAEALPYIQRFSGKTIVVKYGGNAMTEEALKNGFARDIVLMKLVGMNPVVVHGGGPQIGHLLERVGKQSEFIQGMRVTDSETMDIVEMVLGGMVNKEIVNLIHQHNGNAVGLTGKDGNLIRAKKMEMTAFNEDLNAPELIDLGHVGEVERINTKVLDMLIQDDFIPVIAPVGVDEQGHSYNINADLVAGKVAEALHAEKLMLLTNTPGLLDKQGELLTGLNAESVAALIEDGTIYGGMLPKIQCALDAVQNGVESSHIIDGRVEHAVMLEVFTDEGVGTLITSH.

Residues 68 to 69 (GG), arginine 90, and asparagine 195 each bind substrate.

The protein belongs to the acetylglutamate kinase family. ArgB subfamily.

Its subcellular location is the cytoplasm. It carries out the reaction N-acetyl-L-glutamate + ATP = N-acetyl-L-glutamyl 5-phosphate + ADP. Its pathway is amino-acid biosynthesis; L-arginine biosynthesis; N(2)-acetyl-L-ornithine from L-glutamate: step 2/4. Functionally, catalyzes the ATP-dependent phosphorylation of N-acetyl-L-glutamate. This chain is Acetylglutamate kinase, found in Hydrogenovibrio crunogenus (strain DSM 25203 / XCL-2) (Thiomicrospira crunogena).